An 86-amino-acid polypeptide reads, in one-letter code: Small ribosomal subunit protein bS18 (86 aa).

This sequence belongs to the bacterial ribosomal protein bS18 family. As to quaternary structure, part of the 30S ribosomal subunit. Forms a tight heterodimer with protein bS6.

Functionally, binds as a heterodimer with protein bS6 to the central domain of the 16S rRNA, where it helps stabilize the platform of the 30S subunit. In Campylobacter jejuni subsp. jejuni serotype O:6 (strain 81116 / NCTC 11828), this protein is Small ribosomal subunit protein bS18.